Reading from the N-terminus, the 1014-residue chain is Probable LRR receptor-like serine/threonine-protein kinase At1g07650 (1014 aa).

Positions methionine 1 to glycine 23 are cleaved as a signal peptide. The Extracellular portion of the chain corresponds to phenylalanine 24 to aspartate 619. Residues asparagine 76, asparagine 87, and asparagine 101 are each glycosylated (N-linked (GlcNAc...) asparagine). LRR repeat units lie at residues serine 89–lysine 112, leucine 113–methionine 137, leucine 139–leucine 160, threonine 161–leucine 184, histidine 186–leucine 207, leucine 208–arginine 234, leucine 256–asparagine 279, leucine 280–leucine 304, lysine 305–asparagine 327, lysine 329–arginine 352, and lysine 354–arginine 376. N-linked (GlcNAc...) asparagine glycosylation is present at asparagine 165. Residues asparagine 210, asparagine 220, and asparagine 231 are each glycosylated (N-linked (GlcNAc...) asparagine). N-linked (GlcNAc...) asparagine glycosylation is found at asparagine 362, asparagine 389, asparagine 474, asparagine 481, and asparagine 511. The LRR 12 repeat unit spans residues leucine 516–isoleucine 539. N-linked (GlcNAc...) asparagine glycosylation is present at asparagine 570. A helical transmembrane segment spans residues isoleucine 620–glycine 640. Residues valine 641–aspartate 1014 lie on the Cytoplasmic side of the membrane. Threonine 667 is modified (phosphothreonine). The region spanning phenylalanine 678–leucine 960 is the Protein kinase domain. ATP contacts are provided by residues isoleucine 684 to valine 692 and lysine 706. The residue at position 751 (tyrosine 751) is a Phosphotyrosine. The Proton acceptor role is filled by aspartate 805. Residues serine 809 and serine 838 each carry the phosphoserine modification. Phosphothreonine is present on residues threonine 839 and threonine 844. Tyrosine 852 is subject to Phosphotyrosine. Position 989 is a phosphoserine (serine 989). Over residues serine 989–serine 1002 the composition is skewed to polar residues. The disordered stretch occupies residues serine 989–aspartate 1014.

This sequence belongs to the protein kinase superfamily. Ser/Thr protein kinase family.

It is found in the membrane. It carries out the reaction L-seryl-[protein] + ATP = O-phospho-L-seryl-[protein] + ADP + H(+). It catalyses the reaction L-threonyl-[protein] + ATP = O-phospho-L-threonyl-[protein] + ADP + H(+). In Arabidopsis thaliana (Mouse-ear cress), this protein is Probable LRR receptor-like serine/threonine-protein kinase At1g07650.